We begin with the raw amino-acid sequence, 211 residues long: Probable calcium-binding protein CML11 (211 aa).

2 disordered regions span residues 1-22 (MSEP…AAAT) and 40-60 (SCSA…LGDD). Residues 44–53 (QQQQQQQQQQ) are compositionally biased toward low complexity. 4 consecutive EF-hand domains span residues 60–95 (DQLG…LGLK), 96–131 (PSTD…ELLY), 136–171 (YSED…LGHA), and 172–207 (LTVK…AAFD). Residues Asp73, Asn75, Asp77, Ser79, Glu84, Asp109, Asn111, Asn113, Glu120, Asp149, Asp151, Asn153, Glu160, Asp185, Asp187, Asp189, Arg191, and Glu196 each coordinate Ca(2+).

Potential calcium sensor. This Oryza sativa subsp. japonica (Rice) protein is Probable calcium-binding protein CML11 (CML11).